Here is a 312-residue protein sequence, read N- to C-terminus: Malate dehydrogenase (312 aa).

NAD(+)-binding positions include Gly-7 to Gly-13 and Asp-34. Arg-81 and Arg-87 together coordinate substrate. NAD(+) is bound by residues Asn-94 and Ile-117–Asn-119. Asn-119 and Arg-153 together coordinate substrate. Catalysis depends on His-177, which acts as the Proton acceptor. Met-227 contributes to the NAD(+) binding site.

This sequence belongs to the LDH/MDH superfamily. MDH type 1 family. In terms of assembly, homodimer.

The enzyme catalyses (S)-malate + NAD(+) = oxaloacetate + NADH + H(+). In terms of biological role, catalyzes the reversible oxidation of malate to oxaloacetate. The sequence is that of Malate dehydrogenase from Escherichia coli O7:K1 (strain IAI39 / ExPEC).